The following is a 261-amino-acid chain: Ethanolamine ammonia-lyase small subunit (261 aa).

The adenosylcob(III)alamin site is built by Val-158, Glu-179, and Cys-208.

This sequence belongs to the EutC family. As to quaternary structure, the basic unit is a heterodimer which dimerizes to form tetramers. The heterotetramers trimerize; 6 large subunits form a core ring with 6 small subunits projecting outwards. Requires adenosylcob(III)alamin as cofactor.

The protein localises to the bacterial microcompartment. The catalysed reaction is ethanolamine = acetaldehyde + NH4(+). It functions in the pathway amine and polyamine degradation; ethanolamine degradation. Its function is as follows. Catalyzes the deamination of various vicinal amino-alcohols to oxo compounds. Allows this organism to utilize ethanolamine as the sole source of nitrogen and carbon in the presence of external vitamin B12. In Bradyrhizobium diazoefficiens (strain JCM 10833 / BCRC 13528 / IAM 13628 / NBRC 14792 / USDA 110), this protein is Ethanolamine ammonia-lyase small subunit.